A 98-amino-acid chain; its full sequence is Co-chaperonin GroES (98 aa).

The protein belongs to the GroES chaperonin family. Heptamer of 7 subunits arranged in a ring. Interacts with the chaperonin GroEL.

The protein resides in the cytoplasm. Functionally, together with the chaperonin GroEL, plays an essential role in assisting protein folding. The GroEL-GroES system forms a nano-cage that allows encapsulation of the non-native substrate proteins and provides a physical environment optimized to promote and accelerate protein folding. GroES binds to the apical surface of the GroEL ring, thereby capping the opening of the GroEL channel. The sequence is that of Co-chaperonin GroES from Clavibacter michiganensis subsp. michiganensis (strain NCPPB 382).